We begin with the raw amino-acid sequence, 416 residues long: Serine/threonine transporter SstT (416 aa).

The next 9 membrane-spanning stretches (helical) occupy residues 14 to 34, 43 to 63, 82 to 102, 141 to 161, 192 to 212, 220 to 240, 298 to 318, 339 to 359, and 363 to 383; these read GSIV…ALLS, FLGT…VFVL, VLVL…VASF, ALAT…GVAL, IGVF…ALMG, LLGS…FLAI, MAGA…TLGV, ASGV…LFGI, and VAMQ…SAET.

Belongs to the dicarboxylate/amino acid:cation symporter (DAACS) (TC 2.A.23) family.

The protein resides in the cell inner membrane. The enzyme catalyses L-serine(in) + Na(+)(in) = L-serine(out) + Na(+)(out). It carries out the reaction L-threonine(in) + Na(+)(in) = L-threonine(out) + Na(+)(out). Involved in the import of serine and threonine into the cell, with the concomitant import of sodium (symport system). This is Serine/threonine transporter SstT from Laribacter hongkongensis (strain HLHK9).